The primary structure comprises 660 residues: Leucine-rich repeat transmembrane protein FLRT2 (660 aa).

The first 35 residues, 1–35, serve as a signal peptide directing secretion; sequence MGLQTTKWPGRGAFILKFWLIISLGLYLQVSKLLA. Cystine bridges form between C36/C42 and C40/C49. The region spanning 36–63 is the LRRNT domain; the sequence is CPSVCRCDRNFVYCNERSLTSVPLGIPE. Topologically, residues 36–540 are extracellular; sequence CPSVCRCDRN…QTTSHSMGSP (505 aa). 10 LRR repeats span residues 62-87, 88-108, 109-131, 132-157, 159-181, 183-202, 203-228, 229-251, 252-274, and 275-298; these read PEGV…LHNV, QSVH…MNLP, KNVR…ALAQ, LLKL…AFRE, ISLK…LPVD, QELR…AFQN, LTSL…TFSH, LTKL…DLPG, THLI…AFAN, and LRKL…VFDH. N-linked (GlcNAc...) asparagine glycosylation occurs at N202. The LRRCT domain maps to 310–362; the sequence is NPWFCDCSIKWVTEWLKYIPSSLNVRGFMCQGPEQVRGMAVRELNMNLLSCPT. 2 disulfides stabilise this stretch: C314–C339 and C316–C360. The span at 371 to 396 shows a compositional bias: low complexity; sequence TPAPSTVSPTTQSPTLSVPSPSRGSV. The tract at residues 371–413 is disordered; the sequence is TPAPSTVSPTTQSPTLSVPSPSRGSVPPAPTPSKLPTIPDWDG. Residues 419-517 enclose the Fibronectin type-III domain; that stretch reads PPISERIQLS…ICSEATTHAS (99 aa). Residues 541-561 traverse the membrane as a helical segment; the sequence is FLLAGLIGGAVIFVLVVLLSV. At 562–660 the chain is on the cytoplasmic side; the sequence is FCWHMHKKGR…SVPDLEHCHT (99 aa).

In terms of assembly, self-associates (via leucine-rich repeats), giving rise to homooligomers. Interacts with FGFR1. Interacts with FGFR2. Interacts (via extracellular domain) with ADGRL1/LPHN1. Interacts (via extracellular domain) with ADGRL3 (via olfactomedin-like domain). Interacts (via extracellular domain) with UNC5D (via the first Ig-like domain). Can also interact (via extracellular domain) with UNC5B, but with much lower affinity. Interacts (via extracellular domain) with FN1. Post-translationally, N-glycosylated. Proteolytic cleavage in the juxtamembrane region gives rise to a soluble ectodomain. Cleavage is probably effected by a metalloprotease. In terms of tissue distribution, detected in adult brain (at protein level).

The protein resides in the cell membrane. Its subcellular location is the endoplasmic reticulum membrane. It is found in the cell junction. The protein localises to the focal adhesion. It localises to the secreted. The protein resides in the extracellular space. Its subcellular location is the extracellular matrix. It is found in the synapse. The protein localises to the synaptosome. It localises to the microsome membrane. In terms of biological role, functions in cell-cell adhesion, cell migration and axon guidance. Mediates cell-cell adhesion via its interactions with ADGRL3 and probably also other latrophilins that are expressed at the surface of adjacent cells. May play a role in the migration of cortical neurons during brain development via its interaction with UNC5D. Mediates axon growth cone collapse and plays a repulsive role in neuron guidance via its interaction with UNC5D, and possibly also other UNC-5 family members. Plays a role in fibroblast growth factor-mediated signaling cascades. Required for normal organization of the cardiac basement membrane during embryogenesis, and for normal embryonic epicardium and heart morphogenesis. This chain is Leucine-rich repeat transmembrane protein FLRT2, found in Mus musculus (Mouse).